The primary structure comprises 131 residues: Glycine cleavage system H protein (131 aa).

Residues 24–106 (IATIGISAFA…YGEGWLLKLR (83 aa)) form the Lipoyl-binding domain. Position 65 is an N6-lipoyllysine (Lys65).

Belongs to the GcvH family. As to quaternary structure, the glycine cleavage system is composed of four proteins: P, T, L and H. It depends on (R)-lipoate as a cofactor.

The glycine cleavage system catalyzes the degradation of glycine. The H protein shuttles the methylamine group of glycine from the P protein to the T protein. The sequence is that of Glycine cleavage system H protein from Gloeothece citriformis (strain PCC 7424) (Cyanothece sp. (strain PCC 7424)).